Here is a 1528-residue protein sequence, read N- to C-terminus: Intraflagellar transport protein 121 (1528 aa).

4 WD repeats span residues serine 123–proline 170, serine 244–serine 285, proline 619–leucine 667, and proline 759–serine 798. The interval aspartate 914–glutamine 933 is disordered. Residues threonine 920–glutamine 933 show a composition bias toward low complexity.

The protein localises to the cell projection. It localises to the cilium. The protein resides in the flagellum. Its subcellular location is the cytoplasm. It is found in the cytoskeleton. The protein localises to the flagellum axoneme. It localises to the flagellum basal body. Component of the intraflagellar transport complex A (IFT-A) involved in flagellar assembly. This is Intraflagellar transport protein 121 from Giardia intestinalis (strain ATCC 50803 / WB clone C6) (Giardia lamblia).